The sequence spans 1744 residues: Myotubularin-related protein 5 (1744 aa).

Residues D14–E150 form the uDENN domain. Positions E165–R304 constitute a cDENN domain. A dDENN domain is found at V306–H412. Residues K787–L871 enclose the GRAM domain. Positions N996–A1447 constitute a Myotubularin phosphatase domain. Residues T1102–A1116 show a composition bias toward polar residues. A disordered region spans residues T1102 to S1123. Residues I1540–G1590 form a Phorbol-ester/DAG-type zinc finger. The region spanning P1643–R1743 is the PH domain.

The protein belongs to the protein-tyrosine phosphatase family. Non-receptor class myotubularin subfamily.

Functionally, probably acts as an adapter for other myotubularin-like phosphatases. The sequence is that of Myotubularin-related protein 5 from Caenorhabditis elegans.